We begin with the raw amino-acid sequence, 122 residues long: Flagellar protein FliT (122 aa).

The segment at 1–50 (MTSTVEFINRWQRIALLSQSLLELAQRGEWDLLLQQEVSYLQSIETVMEK) is required for homodimerization. Residues 60 to 98 (IQDMVAGYIKQTLDNEQLLKGLLQQRLDELSSLIGQSTR) form a fliD binding region.

This sequence belongs to the FliT family. As to quaternary structure, homodimer. Interacts with FliD and FlhC.

It localises to the cytoplasm. The protein localises to the cytosol. Functionally, dual-function protein that regulates the transcription of class 2 flagellar operons and that also acts as an export chaperone for the filament-capping protein FliD. As a transcriptional regulator, acts as an anti-FlhDC factor; it directly binds FlhC, thus inhibiting the binding of the FlhC/FlhD complex to class 2 promoters, resulting in decreased expression of class 2 flagellar operons. As a chaperone, effects FliD transition to the membrane by preventing its premature polymerization, and by directing it to the export apparatus. The chain is Flagellar protein FliT from Salmonella schwarzengrund (strain CVM19633).